The chain runs to 805 residues: Shutoff protein (805 aa).

Residues 1–88 (MESVEKEDSL…QVGRGDQRHG (88 aa)) are disordered. A compositionally biased stretch (polar residues) spans 18–29 (TTASTDAANAPT). 2 stretches are compositionally biased toward basic and acidic residues: residues 59-70 (RSVPTEDKKQDQ) and 79-88 (QVGRGDQRHG). A binding to host EIF4G region spans residues 280–345 (VMSELIVRRA…AVLVTVELEC (66 aa)). Residues 348–466 (RFFADPEMQR…DLWTAFNERS (119 aa)) form the RRM domain. A phosphotyrosine; by host mark is found at tyrosine 365 and tyrosine 682. Residues 684 to 805 (DPQSGEELNP…AGTACSPTQP (122 aa)) form a disordered region. Residues 726–742 (GRGGILGQSGRGGFGRG) show a composition bias toward gly residues. Over residues 754 to 763 (RSFRGRRGVR) the composition is skewed to basic residues.

This sequence belongs to the adenoviridae shutoff protein family. In terms of assembly, monomer. Interacts with hexon protein; this interaction allows chaperoning and trimerization of hexon proteins. Interacts (via N-terminus) with host initiation factor EIF4G (via C-terminus). Interacts (via RRM domain) with viral mRNAs that contain the tripartite leader; this interaction allows ribosome shunting and expression of viral late mRNAs. In terms of processing, might be cleaved by the viral protease. Phosphorylated. Tyrosine phosphorylation enhances preferential binding to tripartite leader mRNAs and allows ribosome shunting. Post-translationally, methylated. Asymmetric dimethylation by host PRMT1 of the Arg/Gly-rich region may regulate shutoff protein binding to hexon and promote the capsid assembly in the nucleus.

The protein resides in the host cytoplasm. In terms of biological role, protein that inhibits host translation while promoting late viral translation by ribosome shunting. Blocks host cap-dependent translation by binding to eIF4G, displacing MKNK1 from cap initiation complexes and preventing EIF4E phosphorylation. Binds to the tripartite leader sequence of viral late mRNAs and recruits host eIF4G, PABPC1/poly-A binding protein and 40S ribosomes subunits on viral mRNAs, allowing ribosome shunting and efficient translation of late viral mRNAs even though conventional translation via ribosome scanning from the cap has been shut off in the host cell. During assembly, acts as a chaperone protein that helps hexon proteins assembly into trimers. The polypeptide is Shutoff protein (Homo sapiens (Human)).